The primary structure comprises 360 residues: Flavin-dependent trigonelline monooxygenase, oxygenase component (360 aa).

The protein belongs to the bacterial luciferase oxidoreductase family. As to quaternary structure, homodimer. The trigonelline monooxygenase is composed of a reductase component TgnA and an oxygenase component TgnB.

The catalysed reaction is N-methylnicotinate + FMNH2 + O2 = (Z)-2-((N-methylformamido)methylene)-5-hydroxybutanolactone + FMN + H(+). The enzyme catalyses N-methylnicotinate + FADH2 + O2 = (Z)-2-((N-methylformamido)methylene)-5-hydroxybutanolactone + FAD + H(+). Its function is as follows. Involved in the degradation of the pyridine ring of trigonelline (TG; N-methylnicotinate) into succinate and methylamine as carbon and nitrogen sources, respectively. Catalyzes the insertion of two oxygens, followed by a ring cleavage of trigonelline to yield (Z)-2-((N-methylformamido)methylene)-5-hydroxybutyrolactone (MFMB). It is able to use reduced FMN or FAD. The sequence is that of Flavin-dependent trigonelline monooxygenase, oxygenase component from Acinetobacter baylyi (strain ATCC 33305 / BD413 / ADP1).